The sequence spans 308 residues: Pseudouridine-5'-phosphate glycosidase (308 aa).

Residue Glu26 is the Proton donor of the active site. 2 residues coordinate substrate: Lys87 and Val107. Asp139 is a Mn(2+) binding site. 141 to 143 (SAD) serves as a coordination point for substrate. Lys160 serves as the catalytic Nucleophile.

The protein belongs to the pseudouridine-5'-phosphate glycosidase family. As to quaternary structure, homotrimer. Requires Mn(2+) as cofactor.

The catalysed reaction is D-ribose 5-phosphate + uracil = psi-UMP + H2O. Functionally, catalyzes the reversible cleavage of pseudouridine 5'-phosphate (PsiMP) to ribose 5-phosphate and uracil. Functions biologically in the cleavage direction, as part of a pseudouridine degradation pathway. This is Pseudouridine-5'-phosphate glycosidase from Legionella pneumophila subsp. pneumophila (strain Philadelphia 1 / ATCC 33152 / DSM 7513).